We begin with the raw amino-acid sequence, 237 residues long: MNKPIYKRILLKLSGEALQGDEGFGIDPSILDRMALEIKELIAMDVEVGVVIGGGNLFRGAKLAKAGMNRVVGDHMGMLATVMNGLAMRDALHRADVNAKLMSAFQLNGICDTYNWSEAIKMLREKRVVIFSAGTGSPFFTTDSAACLRGIEIEADVVLKATKVDGVYNCDPAKNPDAKLFNKLTYAEVIDKELQVMDLAAFTLARDHGMPIRVFNMGKPGALREVVTGETEGTIIS.

ATP is bound at residue 12–15; sequence KLSG. The involved in allosteric activation by GTP stretch occupies residues 20–25; the sequence is GDEGFG. Gly54 contacts UMP. ATP contacts are provided by Gly55 and Arg59. UMP-binding positions include Asp74 and 135 to 142; that span reads TGSPFFTT. 3 residues coordinate ATP: Thr162, Tyr168, and Asp171.

This sequence belongs to the UMP kinase family. Homohexamer.

Its subcellular location is the cytoplasm. The enzyme catalyses UMP + ATP = UDP + ADP. It participates in pyrimidine metabolism; CTP biosynthesis via de novo pathway; UDP from UMP (UMPK route): step 1/1. Allosterically activated by GTP. Inhibited by UTP. In terms of biological role, catalyzes the reversible phosphorylation of UMP to UDP. The polypeptide is Uridylate kinase (Mannheimia succiniciproducens (strain KCTC 0769BP / MBEL55E)).